A 450-amino-acid chain; its full sequence is Tripartite motif-containing protein 77 (450 aa).

The RING-type zinc-finger motif lies at 15-56 (CSICTDYLTDPVTICCGHRFCSPCLCLLWEDTLTPNCCPVCR). The segment at 88 to 131 (SAMLICRRHQEIKNLICETDRSLLCFLCSQSPRHATHKHYMTRE) adopts a B box-type zinc-finger fold. Positions 93, 96, 115, and 121 each coordinate Zn(2+). One can recognise a B30.2/SPRY domain in the interval 269-450 (QLSAWTITGV…LRPFICHGSK (182 aa)).

The protein belongs to the TRIM/RBCC family.

The chain is Tripartite motif-containing protein 77 (TRIM77) from Homo sapiens (Human).